Here is a 779-residue protein sequence, read N- to C-terminus: Lon protease (779 aa).

One can recognise a Lon N-terminal domain in the interval 7–190 (VPVLFLNDSI…LLIGWTGDHL (184 aa)). 352–359 (GPPGVGKT) contributes to the ATP binding site. The 181-residue stretch at 589–769 (TAVPGVATGL…ADIIAAALEP (181 aa)) folds into the Lon proteolytic domain. Active-site residues include serine 675 and lysine 718.

Belongs to the peptidase S16 family. In terms of assembly, homohexamer. Organized in a ring with a central cavity. Oligomerization is Mg(2+)-dependent.

It is found in the cytoplasm. The enzyme catalyses Hydrolysis of proteins in presence of ATP.. Stimulated by unfolded protein. Its function is as follows. ATP-dependent serine protease that mediates the selective degradation of mutant and abnormal proteins as well as certain short-lived regulatory proteins. Required for cellular homeostasis and for survival from DNA damage and developmental changes induced by stress. Degrades polypeptides processively to yield small peptide fragments that are 5 to 10 amino acids long. Binds to DNA in a double-stranded, site-specific manner. In Mycolicibacterium smegmatis (Mycobacterium smegmatis), this protein is Lon protease.